A 283-amino-acid polypeptide reads, in one-letter code: ATP synthase gamma chain (283 aa).

Belongs to the ATPase gamma chain family. As to quaternary structure, F-type ATPases have 2 components, CF(1) - the catalytic core - and CF(0) - the membrane proton channel. CF(1) has five subunits: alpha(3), beta(3), gamma(1), delta(1), epsilon(1). CF(0) has three main subunits: a, b and c.

It localises to the cell membrane. Functionally, produces ATP from ADP in the presence of a proton gradient across the membrane. The gamma chain is believed to be important in regulating ATPase activity and the flow of protons through the CF(0) complex. The protein is ATP synthase gamma chain of Exiguobacterium sibiricum (strain DSM 17290 / CCUG 55495 / CIP 109462 / JCM 13490 / 255-15).